The chain runs to 375 residues: 23S rRNA (uracil(747)-C(5))-methyltransferase RlmC (375 aa).

Cys3, Cys11, Cys14, and Cys87 together coordinate [4Fe-4S] cluster. 4 residues coordinate S-adenosyl-L-methionine: Gln212, Phe241, Glu262, and Asn307. The Nucleophile role is filled by Cys334.

It belongs to the class I-like SAM-binding methyltransferase superfamily. RNA M5U methyltransferase family. RlmC subfamily.

It catalyses the reaction uridine(747) in 23S rRNA + S-adenosyl-L-methionine = 5-methyluridine(747) in 23S rRNA + S-adenosyl-L-homocysteine + H(+). Functionally, catalyzes the formation of 5-methyl-uridine at position 747 (m5U747) in 23S rRNA. In Escherichia coli (strain K12 / MC4100 / BW2952), this protein is 23S rRNA (uracil(747)-C(5))-methyltransferase RlmC.